A 286-amino-acid polypeptide reads, in one-letter code: MPELPEVEVVRRGLHHHLVGKTIASTLVYHERAVRRQSGGAVELAGLLAGQQISGTGRRGKYLWLTLEGSSGAQALVVHLGMSGQMLIGPISRPQHLRIAATLDDGSVLSFVDQRTFGGWMVTDLVTVDGSELPEPVAHIARDPLDELFEIGAVVTRLRGKHTEIKRALLDQTVVSGVGNIYADEALWQARVHGRRLTDGMSRAKLTEVLDSAAAVMRLALAQGGTSFDDLYVNVNGESGYFDRSLEAYGREGEPCRRCGRAMRREAFMNRSSYFCPSCQRLVEPR.

The active-site Schiff-base intermediate with DNA is the Pro-2. Residue Glu-3 is the Proton donor of the active site. Residue Lys-61 is the Proton donor; for beta-elimination activity of the active site. DNA is bound by residues His-96, Arg-115, and Lys-161. The segment at 247–281 (EAYGREGEPCRRCGRAMRREAFMNRSSYFCPSCQR) adopts an FPG-type zinc-finger fold. Arg-271 (proton donor; for delta-elimination activity) is an active-site residue.

It belongs to the FPG family. Monomer. Zn(2+) serves as cofactor.

The enzyme catalyses Hydrolysis of DNA containing ring-opened 7-methylguanine residues, releasing 2,6-diamino-4-hydroxy-5-(N-methyl)formamidopyrimidine.. It catalyses the reaction 2'-deoxyribonucleotide-(2'-deoxyribose 5'-phosphate)-2'-deoxyribonucleotide-DNA = a 3'-end 2'-deoxyribonucleotide-(2,3-dehydro-2,3-deoxyribose 5'-phosphate)-DNA + a 5'-end 5'-phospho-2'-deoxyribonucleoside-DNA + H(+). Involved in base excision repair of DNA damaged by oxidation or by mutagenic agents. Acts as a DNA glycosylase that recognizes and removes damaged bases. Has a preference for oxidized purines, such as 7,8-dihydro-8-oxoguanine (8-oxoG). Has AP (apurinic/apyrimidinic) lyase activity and introduces nicks in the DNA strand. Cleaves the DNA backbone by beta-delta elimination to generate a single-strand break at the site of the removed base with both 3'- and 5'-phosphates. The polypeptide is Formamidopyrimidine-DNA glycosylase (Mycobacteroides abscessus (strain ATCC 19977 / DSM 44196 / CCUG 20993 / CIP 104536 / JCM 13569 / NCTC 13031 / TMC 1543 / L948) (Mycobacterium abscessus)).